The primary structure comprises 338 residues: Protein WVD2-like 2 (338 aa).

Residues Met1–Ala14 show a composition bias toward basic and acidic residues. The disordered stretch occupies residues Met1–Thr150. Polar residues-rich tracts occupy residues Asn15 to Glu37 and Gln59 to Lys69. Over residues Asn100–Ser115 the composition is skewed to low complexity. The span at Arg128–Glu138 shows a compositional bias: basic and acidic residues. Residues Arg177–Lys214 adopt a coiled-coil conformation. Residues Pro222–Glu338 are disordered. Residues Thr288–Lys300 are compositionally biased toward polar residues.

The protein belongs to the TPX2 family. As to expression, expressed in seedlings.

The protein resides in the cytoplasm. Its subcellular location is the cytoskeleton. In terms of biological role, microtubule-associated protein (MAP) that regulates the orientation of interphase cortical microtubules. In Arabidopsis thaliana (Mouse-ear cress), this protein is Protein WVD2-like 2.